The sequence spans 165 residues: MSNRSRSTLLTISFFVLIDWVTKLAVLLYRGNLPNANPILYQYSWGKLFFCICPTFNEGAAFGLFSKYKYFLLLIRIVIILGILAFLFLRKKKTSATTRFSLILLCSGAIGNVGDIFFYNHVIDFISIGYNRWSFPTFNFADIFISLGTLIFVYKLYFPTKQKIK.

3 consecutive transmembrane segments (helical) span residues 9 to 29 (LLTI…VLLY), 69 to 89 (KYFL…FLFL), and 100 to 120 (FSLI…FFYN). Catalysis depends on residues D124 and D142. Residues 133–153 (WSFPTFNFADIFISLGTLIFV) traverse the membrane as a helical segment.

The protein belongs to the peptidase A8 family.

The protein localises to the cell inner membrane. It carries out the reaction Release of signal peptides from bacterial membrane prolipoproteins. Hydrolyzes -Xaa-Yaa-Zaa-|-(S,diacylglyceryl)Cys-, in which Xaa is hydrophobic (preferably Leu), and Yaa (Ala or Ser) and Zaa (Gly or Ala) have small, neutral side chains.. Its pathway is protein modification; lipoprotein biosynthesis (signal peptide cleavage). Functionally, this protein specifically catalyzes the removal of signal peptides from prolipoproteins. The chain is Lipoprotein signal peptidase from Chlamydia felis (strain Fe/C-56) (Chlamydophila felis).